The primary structure comprises 639 residues: MAU2 chromatid cohesion factor homolog (639 aa).

2 TPR repeats span residues 453–486 (GGFY…ANAE) and 493–526 (SCSL…ASKI).

Belongs to the SCC4/mau-2 family. As to quaternary structure, interacts with Nipped-B to form the cohesin loading complex.

It is found in the nucleus. It localises to the nucleoplasm. Its function is as follows. Required for association of the cohesin complex with chromatin during interphase. Plays a role in sister chromatid cohesion and normal progression through prometaphase. The sequence is that of MAU2 chromatid cohesion factor homolog from Drosophila ananassae (Fruit fly).